The following is a 151-amino-acid chain: Phosphoribosyl-AMP cyclohydrolase (151 aa).

Asp-94 contributes to the Mg(2+) binding site. Cys-95 contributes to the Zn(2+) binding site. 2 residues coordinate Mg(2+): Asp-96 and Asp-98. Positions 112 and 119 each coordinate Zn(2+).

It belongs to the PRA-CH family. As to quaternary structure, homodimer. Mg(2+) serves as cofactor. Requires Zn(2+) as cofactor.

It is found in the cytoplasm. The enzyme catalyses 1-(5-phospho-beta-D-ribosyl)-5'-AMP + H2O = 1-(5-phospho-beta-D-ribosyl)-5-[(5-phospho-beta-D-ribosylamino)methylideneamino]imidazole-4-carboxamide. It participates in amino-acid biosynthesis; L-histidine biosynthesis; L-histidine from 5-phospho-alpha-D-ribose 1-diphosphate: step 3/9. In terms of biological role, catalyzes the hydrolysis of the adenine ring of phosphoribosyl-AMP. The sequence is that of Phosphoribosyl-AMP cyclohydrolase from Rhodopseudomonas palustris (strain TIE-1).